Consider the following 643-residue polypeptide: Versicolorin B synthase (643 aa).

A propeptide spanning residues 1 to 41 (MGRNWFQVTAMAVVPVVGIMAAVNPTILSSAASSLPSLGAM) is cleaved from the precursor. FAD contacts are provided by residues 84–85 (TA) and 105–106 (EA). Asn116 carries an N-linked (GlcNAc...) asparagine glycan. 171–174 (GAML) provides a ligand contact to FAD. N-linked (GlcNAc...) asparagine glycosylation is found at Asn221 and Asn507. FAD-binding positions include Ala613 and 624–625 (PM).

It belongs to the GMC oxidoreductase family. As to quaternary structure, homodimer. FAD serves as cofactor. In terms of processing, N-glycosylated.

It is found in the cytoplasm. It localises to the cytosol. The catalysed reaction is (2S-3S)-versiconal hemiacetal = versicolorin B + H2O. It catalyses the reaction (S)-5'-oxoaverantin + H(+) = (1'S,5'S)-averufin + H2O. It participates in mycotoxin biosynthesis; aflatoxin biosynthesis. Functionally, dual cyclase; part of the gene cluster that mediates the biosynthesis of aflatoxins, a group of polyketide-derived furanocoumarins, and part of the most toxic and carcinogenic compounds among the known mycotoxins. The four major aflatoxins produced by A.parasiticus are aflatoxin B1 (AFB1), aflatoxin B2 (AFB2), aflatoxin G1 (AFG1) and aflatoxin G2 (AFG2). Aflk plays a dual role within the aflatoxin pathway, as a 5'-oxoaverantin cyclase that mediates conversion of 5'-oxoaverantin (OAVN) to averufin (AVF), as well as a versicolorin B synthase that converts versiconal (VAL) to versicolorin B (VERB) by closing the bisfuran ring of aflatoxin which is required for DNA-binding, thus giving to aflatoxin its activity as a mutagen. The biosynthesis of aflatoxins begins with the norsolorinic acid synthase aflC that combines a hexanoyl starter unit produced by the fatty acid synthase aflA/aflB and 7 malonyl-CoA extender units to synthesize the precursor NOR. The second step is the conversion of NOR to averantin and requires the norsolorinic acid ketoreductase aflD, which catalyzes the dehydration of norsolorinic acid to form (1'S)-averantin. The norsolorinic acid reductases aflE and aflF may also play a role in the conversion of NOR to AVN. The cytochrome P450 monooxygenase aflG then catalyzes the hydroxylation of AVN to 5'hydroxyaverantin (HAVN). The next step is performed by the 5'-hydroxyaverantin dehydrogenase aflH that transforms HAVN to 5'-oxoaverantin (OAVN) which is further converted to averufin (AVF) by aflK that plays a dual role in the pathway, as a 5'-oxoaverantin cyclase that mediates conversion of 5'-oxoaverantin, as well as a versicolorin B synthase in a later step in the pathway. The averufin oxidase aflI catalyzes the conversion of AVF to versiconal hemiacetal acetate (VHA). VHA is then the substrate for the versiconal hemiacetal acetate esterase aflJ to yield versiconal (VAL). Versicolorin B synthase aflK then converts VAL to versicolorin B (VERB) by closing the bisfuran ring of aflatoxin which is required for DNA-binding, thus giving to aflatoxin its activity as a mutagen. Then, the activity of the versicolorin B desaturase aflL leads to versicolorin A (VERA). A branch point starts from VERB since it can also be converted to dihydrodemethylsterigmatocystin (DMDHST), probably also by aflL, VERA being a precursor for aflatoxins B1 and G1, and DMDHST for aflatoxins B2 and G2. Next, the versicolorin reductase aflM and the cytochrome P450 monooxygenase aflN are involved in conversion of VERA to demethylsterigmatocystin (DMST). AflX and aflY seem also involved in this step, through probable aflX-mediated epoxide ring-opening step following versicolorin A oxidation and aflY-mediated Baeyer-Villiger oxidation required for the formation of the xanthone ring. The methyltransferase aflO then leads to the modification of DMST to sterigmatocystin (ST), and of DMDHST to dihydrosterigmatocystin (DHST). Both ST and DHST are then substrates of the O-methyltransferase aflP to yield O-methylsterigmatocystin (OMST) and dihydro-O-methylsterigmatocystin (DHOMST), respectively. Finally OMST is converted to aflatoxins B1 and G1, and DHOMST to aflatoxins B2 and G2, via the action of several enzymes including O-methylsterigmatocystin oxidoreductase aflQ, the cytochrome P450 monooxygenase aflU, but also the NADH-dependent flavin oxidoreductase nadA which is specifically required for the synthesis of AFG1. The chain is Versicolorin B synthase from Aspergillus parasiticus (strain ATCC 56775 / NRRL 5862 / SRRC 143 / SU-1).